Consider the following 601-residue polypeptide: Glutathione-regulated potassium-efflux system protein KefB (601 aa).

13 helical membrane passes run Ala-4–Ala-24, Ile-29–Phe-49, Glu-55–Leu-75, Ile-87–Met-107, Phe-111–Ala-131, Val-152–Gly-172, His-177–Gly-197, Phe-207–Ser-227, Leu-230–Leu-250, Ala-262–Leu-282, Leu-284–Ile-304, Met-324–Ala-344, and Ala-356–Ile-376. In terms of domain architecture, RCK N-terminal spans Lys-400–Thr-519.

Belongs to the monovalent cation:proton antiporter 2 (CPA2) transporter (TC 2.A.37) family. KefB subfamily. In terms of assembly, interacts with the regulatory subunit KefG.

Its subcellular location is the cell inner membrane. Pore-forming subunit of a potassium efflux system that confers protection against electrophiles. Catalyzes K(+)/H(+) antiport. The sequence is that of Glutathione-regulated potassium-efflux system protein KefB from Salmonella enteritidis PT4 (strain P125109).